The sequence spans 182 residues: Inner membrane-spanning protein YciB (182 aa).

Transmembrane regions (helical) follow at residues 22–42 (IYAA…VVWV), 53–73 (ITLV…NEAF), 76–96 (WKVT…QFLF), 121–141 (FSWG…AFYL), and 149–169 (FKVF…GIYI).

The protein belongs to the YciB family.

It localises to the cell inner membrane. In terms of biological role, plays a role in cell envelope biogenesis, maintenance of cell envelope integrity and membrane homeostasis. The protein is Inner membrane-spanning protein YciB of Tolumonas auensis (strain DSM 9187 / NBRC 110442 / TA 4).